A 702-amino-acid polypeptide reads, in one-letter code: Arginine decarboxylase 1, chloroplastic (702 aa).

Residues 1-52 (MPALAFVDTPIDTFSSIFTPSSVSTAVVDGSCHWSPSLSSSLYRIDGWGAPY) constitute a chloroplast transit peptide. The residue at position 136 (Lys136) is an N6-(pyridoxal phosphate)lysine. Pyridoxal 5'-phosphate is bound by residues Ser288, Gly325, and 374–377 (ESGR). 320–330 (IDIGGGLGIDY) contributes to the substrate binding site. 436-437 (YV) provides a ligand contact to substrate. Residue Cys524 is the Proton donor; shared with dimeric partner of the active site. A substrate-binding site is contributed by Asp525. Tyr565 contributes to the pyridoxal 5'-phosphate binding site.

It belongs to the Orn/Lys/Arg decarboxylase class-II family. SpeA subfamily. In terms of assembly, homodimer. Only the dimer is catalytically active, as the active sites are constructed of residues from both monomers. May form a head-to-tail homodimer. Homodimer and heterodimer with ADC2. Requires pyridoxal 5'-phosphate as cofactor. Mg(2+) is required as a cofactor.

It is found in the plastid. The protein resides in the chloroplast. The protein localises to the cytoplasm. Its subcellular location is the cytosol. It carries out the reaction L-arginine + H(+) = agmatine + CO2. It participates in amine and polyamine biosynthesis; agmatine biosynthesis; agmatine from L-arginine: step 1/1. Functionally, required for the biosynthesis of putrescine. Catalyzes the first step of polyamine (PA) biosynthesis to produce putrescine from arginine. Is a minor contributor to basal arginine decarboxylase (ADC) activity and putrescine biosynthesis. Accumulation of putrescine plays a positive role in freezing tolerance. Production of polyamines is essential for normal seed development. Controls PA homeostasis which is crucial for normal plant growth and development. This is Arginine decarboxylase 1, chloroplastic from Arabidopsis thaliana (Mouse-ear cress).